Consider the following 36-residue polypeptide: Photosystem I reaction center subunit VIII (36 aa).

A helical membrane pass occupies residues 6–26 (LPSIFVPLVGLVFPAIAMASL).

The protein belongs to the PsaI family.

The protein localises to the plastid. It localises to the chloroplast thylakoid membrane. Its function is as follows. May help in the organization of the PsaL subunit. The protein is Photosystem I reaction center subunit VIII of Liriodendron tulipifera (Tuliptree).